A 95-amino-acid polypeptide reads, in one-letter code: uncharacterized protein (95 aa).

An N-terminal signal peptide occupies residues 1-19; it reads MAILMLSLQLILLLIPSIS. N-linked (GlcNAc...) asparagine glycans are attached at residues Asn38 and Asn41.

It is found in the secreted. This is an uncharacterized protein from Homo sapiens (Human).